Reading from the N-terminus, the 2144-residue chain is HEAT repeat-containing protein 1 (2144 aa).

Residue Met-1 is modified to N-acetylmethionine. Thr-2 carries the N-acetylthreonine; in HEAT repeat-containing protein 1, N-terminally processed modification. At Ser-516 the chain carries Phosphoserine. An HEAT 1 repeat occupies 913–951; the sequence is ASISSPVVTSLLINLGSPVKEVRRAAIQCLQALSGVASP. Residues 1170-1191 form a disordered region; it reads KAKPLGTVQQKRRQKMQQKKSQ. Position 1190 is a phosphoserine (Ser-1190). The HEAT 2 repeat unit spans residues 1347–1385; the sequence is NKTVKMVIPALIQSDSGDSIEVSRNVEEIVVKIISVFVD. Ser-1492 carries the phosphoserine modification. HEAT repeat units follow at residues 1594-1632, 1730-1770, and 2100-2138; these read LLPTETFIPVIRGLVGNPLPSVRRKALDLLNNKLQQNIS, IPQL…VVET, and IVLLPESIPFLAELMEDECEEVEHQCQKTIQQLETVLGE.

It belongs to the HEATR1/UTP10 family. In terms of assembly, part of the small subunit (SSU) processome, composed of more than 70 proteins and the RNA chaperone small nucleolar RNA (snoRNA) U3. Interacts with MYC; the interaction is required for localization of MYC to the nucleolus.

It is found in the nucleus. Its subcellular location is the nucleolus. Its function is as follows. Ribosome biogenesis factor; required for recruitment of Myc to nucleoli. Involved in nucleolar processing of pre-18S ribosomal RNA. Required for optimal pre-ribosomal RNA transcription by RNA polymerase I. Part of the small subunit (SSU) processome, first precursor of the small eukaryotic ribosomal subunit. During the assembly of the SSU processome in the nucleolus, many ribosome biogenesis factors, an RNA chaperone and ribosomal proteins associate with the nascent pre-rRNA and work in concert to generate RNA folding, modifications, rearrangements and cleavage as well as targeted degradation of pre-ribosomal RNA by the RNA exosome. Involved in neuronal-lineage cell proliferation. The sequence is that of HEAT repeat-containing protein 1 from Homo sapiens (Human).